The following is a 361-amino-acid chain: uncharacterized protein (361 aa).

This is an uncharacterized protein from Schizosaccharomyces pombe (strain 972 / ATCC 24843) (Fission yeast).